The following is an 836-amino-acid chain: DNA gyrase subunit A (836 aa).

The Topo IIA-type catalytic domain maps to 46–510 (LPDARDGLKP…ISEEIDDESL (465 aa)). Tyr-134 acts as the O-(5'-phospho-DNA)-tyrosine intermediate in catalysis. Positions 537–543 (QHRGGVG) match the GyrA-box motif.

It belongs to the type II topoisomerase GyrA/ParC subunit family. As to quaternary structure, heterotetramer, composed of two GyrA and two GyrB chains. In the heterotetramer, GyrA contains the active site tyrosine that forms a transient covalent intermediate with DNA, while GyrB binds cofactors and catalyzes ATP hydrolysis.

Its subcellular location is the cytoplasm. It catalyses the reaction ATP-dependent breakage, passage and rejoining of double-stranded DNA.. Functionally, a type II topoisomerase that negatively supercoils closed circular double-stranded (ds) DNA in an ATP-dependent manner to modulate DNA topology and maintain chromosomes in an underwound state. Negative supercoiling favors strand separation, and DNA replication, transcription, recombination and repair, all of which involve strand separation. Also able to catalyze the interconversion of other topological isomers of dsDNA rings, including catenanes and knotted rings. Type II topoisomerases break and join 2 DNA strands simultaneously in an ATP-dependent manner. The protein is DNA gyrase subunit A of Mycoplasma genitalium (strain ATCC 33530 / DSM 19775 / NCTC 10195 / G37) (Mycoplasmoides genitalium).